A 266-amino-acid chain; its full sequence is Tryptophan synthase alpha chain (266 aa).

Active-site proton acceptor residues include E47 and D58.

This sequence belongs to the TrpA family. Tetramer of two alpha and two beta chains.

The enzyme catalyses (1S,2R)-1-C-(indol-3-yl)glycerol 3-phosphate + L-serine = D-glyceraldehyde 3-phosphate + L-tryptophan + H2O. The protein operates within amino-acid biosynthesis; L-tryptophan biosynthesis; L-tryptophan from chorismate: step 5/5. In terms of biological role, the alpha subunit is responsible for the aldol cleavage of indoleglycerol phosphate to indole and glyceraldehyde 3-phosphate. The chain is Tryptophan synthase alpha chain from Leptospira biflexa serovar Patoc (strain Patoc 1 / Ames).